The chain runs to 605 residues: Proline--tRNA ligase (605 aa).

It belongs to the class-II aminoacyl-tRNA synthetase family. ProS type 1 subfamily. Homodimer.

The protein localises to the cytoplasm. The enzyme catalyses tRNA(Pro) + L-proline + ATP = L-prolyl-tRNA(Pro) + AMP + diphosphate. Catalyzes the attachment of proline to tRNA(Pro) in a two-step reaction: proline is first activated by ATP to form Pro-AMP and then transferred to the acceptor end of tRNA(Pro). As ProRS can inadvertently accommodate and process non-cognate amino acids such as alanine and cysteine, to avoid such errors it has two additional distinct editing activities against alanine. One activity is designated as 'pretransfer' editing and involves the tRNA(Pro)-independent hydrolysis of activated Ala-AMP. The other activity is designated 'posttransfer' editing and involves deacylation of mischarged Ala-tRNA(Pro). The misacylated Cys-tRNA(Pro) is not edited by ProRS. This Bifidobacterium adolescentis (strain ATCC 15703 / DSM 20083 / NCTC 11814 / E194a) protein is Proline--tRNA ligase.